A 314-amino-acid chain; its full sequence is tRNA selenocysteine 1-associated protein 1 (314 aa).

2 consecutive RRM domains span residues 2-85 (NSLW…RSNY) and 94-173 (FSLF…LASS).

Belongs to the RRM TRSPAP family.

It localises to the nucleus. Its subcellular location is the cytoplasm. Involved in the early steps of selenocysteine biosynthesis and tRNA(Sec) charging to the later steps resulting in the cotranslational incorporation of selenocysteine into selenoproteins. This Danio rerio (Zebrafish) protein is tRNA selenocysteine 1-associated protein 1.